The sequence spans 335 residues: Large ribosomal subunit protein uL10 (335 aa).

The segment at 304–335 (GAAAPVEEAPVEEKKEEKKEEAAAPAGLGMLF) is disordered. Over residues 314–325 (VEEKKEEKKEEA) the composition is skewed to basic and acidic residues.

This sequence belongs to the universal ribosomal protein uL10 family. As to quaternary structure, part of the 50S ribosomal subunit. Homodimer, it forms part of the ribosomal stalk which helps the ribosome interact with GTP-bound translation factors. Forms both a pentameric L10(L12)2(L12)2 and heptameric L10(L12)2(L12)2(L12)2 complex, where L10 forms an elongated spine to which the L12 dimers bind in a sequential fashion. The proportion of heptameric complexes increases during cell growth.

Its function is as follows. Forms part of the ribosomal stalk, playing a central role in the interaction of the ribosome with GTP-bound translation factors. This Methanococcus maripaludis (strain DSM 14266 / JCM 13030 / NBRC 101832 / S2 / LL) protein is Large ribosomal subunit protein uL10.